The following is a 63-amino-acid chain: Phylloseptin-Az1 (63 aa).

An N-terminal signal peptide occupies residues 1-19 (LKKSLFLVVFLGLATLSIC). A propeptide spanning residues 20-41 (EEEKRETEEEEYNQGEDDKSEE) is cleaved from the precursor. Phe62 bears the Phenylalanine amide mark.

As to expression, expressed by the skin glands.

Its subcellular location is the secreted. Has antimicrobial activity. This chain is Phylloseptin-Az1, found in Pithecopus azureus (Orange-legged monkey tree frog).